The following is a 189-amino-acid chain: Stathmin-4 (189 aa).

Residues C20 and C22 are each lipidated (S-palmitoyl cysteine). The SLD domain maps to 48–189 (SDMEVIELNK…NKELKEEASR (142 aa)). Residue S90 is modified to Phosphoserine. Residues 90 to 188 (SLEEIQKKLE…KNKELKEEAS (99 aa)) adopt a coiled-coil conformation. The interval 168–189 (QEKDKHAEEVRKNKELKEEASR) is disordered.

The protein belongs to the stathmin family.

It localises to the golgi apparatus. The protein localises to the cell projection. The protein resides in the growth cone. It is found in the axon. In terms of biological role, exhibits microtubule-destabilizing activity. The polypeptide is Stathmin-4 (STMN4) (Homo sapiens (Human)).